Here is a 77-residue protein sequence, read N- to C-terminus: Dermatoxin-DA1 (77 aa).

A signal peptide spans 1–22 (MAFLKKSLFLVLFLGLVPLFLC). Positions 23–42 (ENEKREGENEKEENDDQSEE) are excised as a propeptide. Position 76 is a lysine amide (lysine 76).

This sequence belongs to the frog skin active peptide (FSAP) family. Dermatoxin subfamily. As to expression, expressed by the skin glands.

It is found in the secreted. Possesses a potent antimicrobial activity against Gram-positive and Gram-negative bacteria. Probably acts by disturbing membrane functions with its amphipathic structure. The polypeptide is Dermatoxin-DA1 (Agalychnis dacnicolor (Giant Mexican leaf frog)).